Consider the following 129-residue polypeptide: Protein GLUTAMINE DUMPER 2 (129 aa).

Over M1–Y34 the chain is Extracellular. The helical transmembrane segment at L35–C55 threads the bilayer. The Cytoplasmic segment spans residues S56–G129. The interval R66–P89 is disordered. Positions V94–G98 match the VIMAG motif. A disordered region spans residues A106 to G129. A compositionally biased stretch (basic and acidic residues) spans D120–G129.

The protein belongs to the GLUTAMINE DUMPER 1 (TC 9.B.60) family. As to expression, expressed in the vascular tissues.

It is found in the membrane. Its function is as follows. Probable subunit of an amino acid transporter involved in the regulation of the amino acid metabolism. Stimulates amino acid export by activating nonselective amino acid facilitators. In Arabidopsis thaliana (Mouse-ear cress), this protein is Protein GLUTAMINE DUMPER 2 (GDU2).